Consider the following 241-residue polypeptide: Glucosamine-6-phosphate deaminase (241 aa).

Aspartate 67 (proton acceptor; for enolization step) is an active-site residue. Asparagine 136 functions as the For ring-opening step in the catalytic mechanism. Histidine 138 serves as the catalytic Proton acceptor; for ring-opening step. Catalysis depends on glutamate 143, which acts as the For ring-opening step.

Belongs to the glucosamine/galactosamine-6-phosphate isomerase family. NagB subfamily.

It carries out the reaction alpha-D-glucosamine 6-phosphate + H2O = beta-D-fructose 6-phosphate + NH4(+). It participates in amino-sugar metabolism; N-acetylneuraminate degradation; D-fructose 6-phosphate from N-acetylneuraminate: step 5/5. Catalyzes the reversible isomerization-deamination of glucosamine 6-phosphate (GlcN6P) to form fructose 6-phosphate (Fru6P) and ammonium ion. The polypeptide is Glucosamine-6-phosphate deaminase (Bacillus velezensis (strain DSM 23117 / BGSC 10A6 / LMG 26770 / FZB42) (Bacillus amyloliquefaciens subsp. plantarum)).